The following is a 473-amino-acid chain: 3-oxoacyl-[acyl-carrier-protein] synthase I, chloroplastic (473 aa).

The segment covering 1–10 (MQALQSSSLR) has biased composition (polar residues). The disordered stretch occupies residues 1-26 (MQALQSSSLRASPPNPLRLPSNRQSH). Residues 1–46 (MQALQSSSLRASPPNPLRLPSNRQSHQLITNARPLRRQQRSFISAS) constitute a chloroplast transit peptide. Residues 60–470 (KKRVVITGMG…GHNSVVAFSA (411 aa)) enclose the Ketosynthase family 3 (KS3) domain. Residues Cys-224, His-364, and His-400 each act as for beta-ketoacyl synthase activity in the active site.

It belongs to the thiolase-like superfamily. Beta-ketoacyl-ACP synthases family. In terms of assembly, homodimer.

It localises to the plastid. Its subcellular location is the chloroplast stroma. It catalyses the reaction a fatty acyl-[ACP] + malonyl-[ACP] + H(+) = a 3-oxoacyl-[ACP] + holo-[ACP] + CO2. Its function is as follows. Catalyzes the condensation reaction of fatty acid synthesis by the addition to an acyl acceptor of two carbons from malonyl-ACP. Specific for elongation from C-10 to unsaturated C-16 and C-18 fatty acids. The chain is 3-oxoacyl-[acyl-carrier-protein] synthase I, chloroplastic (KAS1) from Arabidopsis thaliana (Mouse-ear cress).